The sequence spans 144 residues: Arginine decarboxylase proenzyme (144 aa).

Catalysis depends on Ser-80, which acts as the Schiff-base intermediate with substrate; via pyruvic acid. A Pyruvic acid (Ser); by autocatalysis modification is found at Ser-80. Catalysis depends on His-85, which acts as the Proton acceptor; for processing activity. Cys-100 serves as the catalytic Proton donor; for catalytic activity.

It belongs to the prokaryotic AdoMetDC family. Type 1 subfamily. As to quaternary structure, heterooctamer of four alpha and four beta chains arranged as a tetramer of alpha/beta heterodimers. Pyruvate is required as a cofactor. Is synthesized initially as an inactive proenzyme. Formation of the active enzyme involves a self-maturation process in which the active site pyruvoyl group is generated from an internal serine residue via an autocatalytic post-translational modification. Two non-identical subunits are generated from the proenzyme in this reaction, and the pyruvate is formed at the N-terminus of the alpha chain, which is derived from the carboxyl end of the proenzyme. The post-translation cleavage follows an unusual pathway, termed non-hydrolytic serinolysis, in which the side chain hydroxyl group of the serine supplies its oxygen atom to form the C-terminus of the beta chain, while the remainder of the serine residue undergoes an oxidative deamination to produce ammonia and the pyruvoyl group blocking the N-terminus of the alpha chain.

It carries out the reaction L-arginine + H(+) = agmatine + CO2. It participates in amine and polyamine biosynthesis; agmatine biosynthesis; agmatine from L-arginine: step 1/1. Its function is as follows. Specifically catalyzes the decarboxylation of L-arginine to agmatine. Has no S-adenosylmethionine decarboxylase (AdoMetDC) activity. The chain is Arginine decarboxylase proenzyme from Ignicoccus hospitalis (strain KIN4/I / DSM 18386 / JCM 14125).